Consider the following 434-residue polypeptide: Putative ankyrin repeat protein FPV219 (434 aa).

ANK repeat units follow at residues aspartate 33–leucine 62, glutamate 66–cysteine 95, histidine 101–tyrosine 131, threonine 132–threonine 161, leucine 165–serine 195, leucine 196–alanine 225, and glutamate 229–isoleucine 258.

The sequence is that of Putative ankyrin repeat protein FPV219 from Fowlpox virus (strain NVSL) (FPV).